A 393-amino-acid chain; its full sequence is MIGVSILGSTGSIGMSTLDVLARYPERYRVQALSANRSVAQIYQQCLQFRPSQVVMVDPDAAEQLRQRLHPVVPEIEVSSGSEALETIVTSPDTDYVMAAIVGAAGLLPTLAAARAGKRILLANKESLVMSGQLFMSAVSESGAELLPIDSEHNALWQCMPAEGRELPLHRKGVRRILLTASGGPFRERALSELDNVTPDEACAHPNWSMGRKISVDSATMMNKGLEVIEACWLFDAAACQIEVVLHPQSVIHSMVDYVDGSVLAQLGNPDMRTPIAYGLAWPERMESGVTLLDLFAIGQLTFCQPDLQRFPCLGLAYAALERGGTCSTILNAANEVAVQAFLDQRIQFTQIPKLIEWTLGRVTPTVADSLPAVLESDAVARQVAKEQVERWY.

Positions 10, 11, 12, 13, 37, and 124 each coordinate NADPH. 1-deoxy-D-xylulose 5-phosphate is bound at residue lysine 125. Residue glutamate 126 coordinates NADPH. Aspartate 150 is a Mn(2+) binding site. 1-deoxy-D-xylulose 5-phosphate contacts are provided by serine 151, glutamate 152, serine 182, and histidine 205. Glutamate 152 contacts Mn(2+). Glycine 211 contributes to the NADPH binding site. Residues serine 218, asparagine 223, lysine 224, and glutamate 227 each contribute to the 1-deoxy-D-xylulose 5-phosphate site. Glutamate 227 lines the Mn(2+) pocket.

This sequence belongs to the DXR family. Mg(2+) is required as a cofactor. The cofactor is Mn(2+).

The enzyme catalyses 2-C-methyl-D-erythritol 4-phosphate + NADP(+) = 1-deoxy-D-xylulose 5-phosphate + NADPH + H(+). It participates in isoprenoid biosynthesis; isopentenyl diphosphate biosynthesis via DXP pathway; isopentenyl diphosphate from 1-deoxy-D-xylulose 5-phosphate: step 1/6. Functionally, catalyzes the NADPH-dependent rearrangement and reduction of 1-deoxy-D-xylulose-5-phosphate (DXP) to 2-C-methyl-D-erythritol 4-phosphate (MEP). This is 1-deoxy-D-xylulose 5-phosphate reductoisomerase from Nitrosococcus oceani (strain ATCC 19707 / BCRC 17464 / JCM 30415 / NCIMB 11848 / C-107).